The sequence spans 343 residues: Methionine import ATP-binding protein MetN (343 aa).

The ABC transporter domain maps to 2 to 241 (IKLSNITKVF…PKTPLAQKFI (240 aa)). Residue 38–45 (GASGAGKS) participates in ATP binding.

It belongs to the ABC transporter superfamily. Methionine importer (TC 3.A.1.24) family. The complex is composed of two ATP-binding proteins (MetN), two transmembrane proteins (MetI) and a solute-binding protein (MetQ).

It localises to the cell inner membrane. It carries out the reaction L-methionine(out) + ATP + H2O = L-methionine(in) + ADP + phosphate + H(+). The catalysed reaction is D-methionine(out) + ATP + H2O = D-methionine(in) + ADP + phosphate + H(+). Functionally, part of the ABC transporter complex MetNIQ involved in methionine import. Responsible for energy coupling to the transport system. In Escherichia coli O157:H7, this protein is Methionine import ATP-binding protein MetN.